The sequence spans 262 residues: Shikimate dehydrogenase (NADP(+)) (262 aa).

Shikimate-binding positions include 15-17 (SRS) and T62. The Proton acceptor role is filled by K66. E78 is a binding site for NADP(+). Shikimate-binding residues include N87 and D102. Residues 126–130 (GAGGA), 150–155 (NRTLAR), and M214 contribute to the NADP(+) site. Y216 is a shikimate binding site. G236 is a binding site for NADP(+).

Belongs to the shikimate dehydrogenase family. In terms of assembly, homodimer.

It catalyses the reaction shikimate + NADP(+) = 3-dehydroshikimate + NADPH + H(+). It functions in the pathway metabolic intermediate biosynthesis; chorismate biosynthesis; chorismate from D-erythrose 4-phosphate and phosphoenolpyruvate: step 4/7. Involved in the biosynthesis of the chorismate, which leads to the biosynthesis of aromatic amino acids. Catalyzes the reversible NADPH linked reduction of 3-dehydroshikimate (DHSA) to yield shikimate (SA). The polypeptide is Shikimate dehydrogenase (NADP(+)) (Acinetobacter baumannii (strain AB0057)).